A 671-amino-acid polypeptide reads, in one-letter code: MSQIPSPNDPASTGAAPSSAAVPAGPSATPAPSPTAGFSLPGHRPPPTGKALAALAVGALGVVYGDIGTSPLYSLKECFGGPHGVHPTDANVLGVLSLVFWAMTFVVTFKYMSFVMRADNRGEGGILALMALVGKTETTRLGRRMLLMLGLFGAALLYGDGIITPAISVLGAVEGVAVAAPAMERAVVPATVVILVFLFLFQKQGTAKVGAVFGPVMLVWFATIAVLGVRGILHDPTILRALLPTHGLSFFARNGWHGFLVLGGVVLVITGGEALYADMGHFGKRPIRVAWLGLAMPALLLNYLGQGALLLHDPGAARNPFYLLAPEWALYPTIAIATAAAIVASQALISGAYSLTQQAIQLGYSPRVTIRHTSQREIGQIYLPEVNWMLGTACLALVLGFQTSSRLASAYGIAVTGTMIVTTLLFHRVMRDRWGWARWKAWPLTSLFLTVDASFFLANVVKFRDGGWFPIAAAALVFTLMSTWKRGRDALALMLKDAGLPLDLFMADVARRKVQRVAGTAVFMTSNPGGVPPVLLHHLKHNKVLHERVVLVSILAHEIPFVNEPERVNARELGSGFFQVIAHYGFMETPDVPALLDSLPRRELAGPRITIVPMETTYFLGRETLLANGPSNIPTWRKRLFIVMARNAQTASAFFGLPPNRVVEMGAQIQL.

The interval 1-43 (MSQIPSPNDPASTGAAPSSAAVPAGPSATPAPSPTAGFSLPGH) is disordered. Over residues 10–37 (PASTGAAPSSAAVPAGPSATPAPSPTAG) the composition is skewed to low complexity. A run of 12 helical transmembrane segments spans residues 52 to 72 (LAALAVGALGVVYGDIGTSPL), 92 to 112 (VLGVLSLVFWAMTFVVTFKYM), 147 to 167 (LMLGLFGAALLYGDGIITPAI), 181 to 201 (PAMERAVVPATVVILVFLFLF), 209 to 229 (VGAVFGPVMLVWFATIAVLGV), 255 to 275 (GWHGFLVLGGVVLVITGGEAL), 291 to 311 (WLGLAMPALLLNYLGQGALLL), 323 to 343 (LLAPEWALYPTIAIATAAAIV), 381 to 401 (IYLPEVNWMLGTACLALVLGF), 407 to 427 (LASAYGIAVTGTMIVTTLLFH), 441 to 461 (AWPLTSLFLTVDASFFLANVV), and 465 to 485 (DGGWFPIAAAALVFTLMSTWK).

Belongs to the HAK/KUP transporter (TC 2.A.72) family.

Its subcellular location is the cell inner membrane. It catalyses the reaction K(+)(in) + H(+)(in) = K(+)(out) + H(+)(out). Its function is as follows. Transport of potassium into the cell. Likely operates as a K(+):H(+) symporter. The chain is Probable potassium transport system protein Kup from Anaeromyxobacter sp. (strain K).